A 682-amino-acid polypeptide reads, in one-letter code: Serine/threonine-protein kinase PAK 6 (682 aa).

Disordered stretches follow at residues 1–30 (MFRK…DPKE), 132–170 (SPQS…QALP), 200–256 (LQSS…QESS), and 270–367 (PATG…NLYL). Residues 12–25 (ISAPQNFQHRVHTS) form the CRIB domain. The tract at residues 26-407 (FDPKEGKFVG…VVDQGDPRLL (382 aa)) is linker. 2 stretches are compositionally biased toward polar residues: residues 270 to 279 (PATGAASSSK) and 297 to 334 (KDSS…QKSL). The Protein kinase domain occupies 408-659 (LDSYVKIGEG…AQELLDHPFL (252 aa)). ATP is bound by residues 414 to 422 (IGEGSTGIV) and lysine 437. Aspartate 527 functions as the Proton acceptor in the catalytic mechanism. A Phosphoserine; by autocatalysis modification is found at serine 561.

The protein belongs to the protein kinase superfamily. STE Ser/Thr protein kinase family. STE20 subfamily. In terms of assembly, interacts tightly with GTP-bound but not GDP-bound CDC42/p21 and RAC1. Interacts with the androgen receptor AR. Interacts with IQGAP1 and PPM1B. In terms of processing, autophosphorylated. Phosphorylated by MAP2K6/MAPKK6, leading to PAK6 activation.

It is found in the cytoplasm. The protein resides in the nucleus. The catalysed reaction is L-seryl-[protein] + ATP = O-phospho-L-seryl-[protein] + ADP + H(+). It carries out the reaction L-threonyl-[protein] + ATP = O-phospho-L-threonyl-[protein] + ADP + H(+). Serine/threonine protein kinase that plays a role in the regulation of gene transcription. The kinase activity is induced by various effectors including AR or MAP2K6/MAPKK6. Phosphorylates the DNA-binding domain of androgen receptor/AR and thereby inhibits AR-mediated transcription. Also inhibits ESR1-mediated transcription. May play a role in cytoskeleton regulation by interacting with IQGAP1. May protect cells from apoptosis through phosphorylation of BAD. The chain is Serine/threonine-protein kinase PAK 6 (Pak6) from Mus musculus (Mouse).